The chain runs to 336 residues: 3-hydroxyisobutyrate dehydrogenase, mitochondrial (336 aa).

Residues 1 to 36 constitute a mitochondrion transit peptide; sequence MAASLRLLGAASGLRYWSRRLRPAAGSFAAVCSRSV. 40 to 68 contacts NAD(+); it reads TPVGFIGLGNMGNPMAKNLMKHGYPLIIY. Residues K60 and K76 each carry the N6-acetyllysine; alternate modification. K60 and K76 each carry N6-succinyllysine; alternate. N6-succinyllysine is present on K95. Residues 103–104 and N108 each bind NAD(+); that span reads LP. K121 is subject to N6-acetyllysine. T134 serves as a coordination point for NAD(+). At K141 the chain carries N6-succinyllysine. K145 is subject to N6-acetyllysine. K149 carries the N6-acetyllysine; alternate modification. At K149 the chain carries N6-succinyllysine; alternate. K209 is an active-site residue. Residues K238 and K242 each carry the N6-acetyllysine; alternate modification. N6-succinyllysine; alternate occurs at positions 238 and 242. K284 lines the NAD(+) pocket. K297 bears the N6-succinyllysine mark. The residue at position 321 (K321) is an N6-acetyllysine; alternate. Position 321 is an N6-succinyllysine; alternate (K321).

This sequence belongs to the HIBADH-related family. 3-hydroxyisobutyrate dehydrogenase subfamily. In terms of assembly, homodimer. As to expression, detected in skin fibroblasts.

It is found in the mitochondrion. It catalyses the reaction 3-hydroxy-2-methylpropanoate + NAD(+) = 2-methyl-3-oxopropanoate + NADH + H(+). It functions in the pathway amino-acid degradation; L-valine degradation. This is 3-hydroxyisobutyrate dehydrogenase, mitochondrial (HIBADH) from Homo sapiens (Human).